Reading from the N-terminus, the 112-residue chain is Urease subunit beta (112 aa).

This sequence belongs to the urease beta subunit family. In terms of assembly, heterotrimer of UreA (gamma), UreB (beta) and UreC (alpha) subunits. Three heterotrimers associate to form the active enzyme.

It is found in the cytoplasm. It carries out the reaction urea + 2 H2O + H(+) = hydrogencarbonate + 2 NH4(+). The protein operates within nitrogen metabolism; urea degradation; CO(2) and NH(3) from urea (urease route): step 1/1. This is Urease subunit beta from Thioalkalivibrio sulfidiphilus (strain HL-EbGR7).